Consider the following 553-residue polypeptide: Glucose-6-phosphate isomerase (553 aa).

Residue E357 is the Proton donor of the active site. Residues H388 and K514 contribute to the active site. Residues 524 to 553 form a disordered region; sequence ITGAGSPPPQSDSSTDGLVRRYRTERGRAG. A compositionally biased stretch (basic and acidic residues) spans 541–553; it reads LVRRYRTERGRAG.

Belongs to the GPI family.

The protein localises to the cytoplasm. The enzyme catalyses alpha-D-glucose 6-phosphate = beta-D-fructose 6-phosphate. It functions in the pathway carbohydrate biosynthesis; gluconeogenesis. It participates in carbohydrate degradation; glycolysis; D-glyceraldehyde 3-phosphate and glycerone phosphate from D-glucose: step 2/4. Catalyzes the reversible isomerization of glucose-6-phosphate to fructose-6-phosphate. The chain is Glucose-6-phosphate isomerase from Mycobacterium bovis (strain BCG / Tokyo 172 / ATCC 35737 / TMC 1019).